The sequence spans 69 residues: MAHITVDDSENLEKAIKRFKRQVEKEGIIREWKKKEFYEKPSTLLNRKKKALRRKLMKKGRKVSDSRLY.

The protein belongs to the bacterial ribosomal protein bS21 family.

In Treponema pallidum (strain Nichols), this protein is Small ribosomal subunit protein bS21 (rpsU).